Reading from the N-terminus, the 506-residue chain is Histidine ammonia-lyase (506 aa).

The segment at residues 143–145 is a cross-link (5-imidazolinone (Ala-Gly)); the sequence is ASG. The residue at position 144 (Ser144) is a 2,3-didehydroalanine (Ser).

Belongs to the PAL/histidase family. Post-translationally, contains an active site 4-methylidene-imidazol-5-one (MIO), which is formed autocatalytically by cyclization and dehydration of residues Ala-Ser-Gly.

The protein localises to the cytoplasm. It carries out the reaction L-histidine = trans-urocanate + NH4(+). The protein operates within amino-acid degradation; L-histidine degradation into L-glutamate; N-formimidoyl-L-glutamate from L-histidine: step 1/3. This is Histidine ammonia-lyase from Salmonella dublin (strain CT_02021853).